A 300-amino-acid chain; its full sequence is E3 ubiquitin-protein ligase RNF212B (300 aa).

Residues 6 to 40 form an RING-type zinc finger; the sequence is CNQCFRKDGAHFFVTSCGHIFCKKCVTLEKCAVCG. Residues 87-124 are a coiled coil; the sequence is LLIAFYKHRITKLETAMQEAQQALVSQDKELSVLRKEN. Positions 141–232 are disordered; the sequence is YQGSRSITPR…SYRTSSASSG (92 aa). A compositionally biased stretch (polar residues) spans 155–165; the sequence is TSPSQSVTPRP. Residues 166–182 show a composition bias toward low complexity; that stretch reads SFQHSSQVVSRSSSAES. Residues 191-200 are compositionally biased toward gly residues; sequence GSLGQGGRGL. Positions 211 to 232 are enriched in polar residues; sequence NETPSPASTHSLSYRTSSASSG.

Homodimer. Autoubiquitinated.

Its subcellular location is the chromosome. It carries out the reaction S-ubiquitinyl-[E2 ubiquitin-conjugating enzyme]-L-cysteine + [acceptor protein]-L-lysine = [E2 ubiquitin-conjugating enzyme]-L-cysteine + N(6)-ubiquitinyl-[acceptor protein]-L-lysine.. The protein operates within protein modification; protein ubiquitination. In terms of biological role, ubiquitin E3 ligase that acts as a crucial factor for crossing-over (CO) formation during meiosis. Essential for normal prophase I progression and for ensuring appropriate CO designation in meiosis. Recruits key components of the cross-over machinery either directly ou indirectly, leading to the activation of the MutL-gamma complex. The function of RNF212B in CO designation is dependent on its catalytic activity. The protein is E3 ubiquitin-protein ligase RNF212B (RNF212B) of Homo sapiens (Human).